The primary structure comprises 389 residues: 1-deoxy-D-xylulose 5-phosphate reductoisomerase (389 aa).

NADPH is bound by residues serine 11, glycine 12, serine 13, valine 14, asparagine 39, and asparagine 122. Residue lysine 123 participates in 1-deoxy-D-xylulose 5-phosphate binding. An NADPH-binding site is contributed by glutamate 124. Position 148 (aspartate 148) interacts with Mn(2+). Residues serine 149, glutamate 150, serine 174, and histidine 197 each coordinate 1-deoxy-D-xylulose 5-phosphate. Glutamate 150 contributes to the Mn(2+) binding site. Glycine 203 is an NADPH binding site. Residues serine 210, asparagine 215, lysine 216, and glutamate 219 each contribute to the 1-deoxy-D-xylulose 5-phosphate site. Residue glutamate 219 coordinates Mn(2+).

This sequence belongs to the DXR family. It depends on Mg(2+) as a cofactor. Mn(2+) serves as cofactor.

The enzyme catalyses 2-C-methyl-D-erythritol 4-phosphate + NADP(+) = 1-deoxy-D-xylulose 5-phosphate + NADPH + H(+). Its pathway is isoprenoid biosynthesis; isopentenyl diphosphate biosynthesis via DXP pathway; isopentenyl diphosphate from 1-deoxy-D-xylulose 5-phosphate: step 1/6. In terms of biological role, catalyzes the NADPH-dependent rearrangement and reduction of 1-deoxy-D-xylulose-5-phosphate (DXP) to 2-C-methyl-D-erythritol 4-phosphate (MEP). The chain is 1-deoxy-D-xylulose 5-phosphate reductoisomerase from Leptospira interrogans serogroup Icterohaemorrhagiae serovar Lai (strain 56601).